Here is a 482-residue protein sequence, read N- to C-terminus: Argininosuccinate synthase (482 aa).

Residues 17–25 (AFSGGLDTS) and Ala-43 each bind ATP. Tyr-99 is an L-citrulline binding site. Residues Gly-129 and Thr-131 each contribute to the ATP site. The L-aspartate site is built by Thr-131, Asn-135, and Asp-136. Residue Asn-135 coordinates L-citrulline. Residue Asp-136 participates in ATP binding. Residues Arg-139 and Ser-192 each coordinate L-citrulline. Residue Asp-194 coordinates ATP. 3 residues coordinate L-citrulline: Thr-201, Glu-203, and Glu-280. The interval 461–482 (SRGEATDEETMLDRAAMESGTD) is disordered.

It belongs to the argininosuccinate synthase family. Type 2 subfamily. Homotetramer.

The protein resides in the cytoplasm. The catalysed reaction is L-citrulline + L-aspartate + ATP = 2-(N(omega)-L-arginino)succinate + AMP + diphosphate + H(+). Its pathway is amino-acid biosynthesis; L-arginine biosynthesis; L-arginine from L-ornithine and carbamoyl phosphate: step 2/3. This chain is Argininosuccinate synthase (argG), found in Streptomyces lavendulae.